The sequence spans 397 residues: Riboflavin biosynthesis protein RibBA (397 aa).

The interval 1–199 (MFHRIEEALE…IEDLIAYRRH (199 aa)) is DHBP synthase. D-ribulose 5-phosphate contacts are provided by residues 26 to 27 (RE), Asp-31, 138 to 142 (RAGHT), and Glu-162. Residue Glu-27 participates in Mg(2+) binding. His-141 contacts Mg(2+). The tract at residues 200–397 (HETLVTREVE…ASKLGHLLNL (198 aa)) is GTP cyclohydrolase II. 250–254 (RVHSE) is a GTP binding site. Cys-255, Cys-266, and Cys-268 together coordinate Zn(2+). GTP-binding positions include Gln-271, 293-295 (EGR), and Thr-315. Asp-327 functions as the Proton acceptor; for GTP cyclohydrolase activity in the catalytic mechanism. The active-site Nucleophile; for GTP cyclohydrolase activity is Arg-329. Residues Thr-350 and Lys-355 each coordinate GTP.

This sequence in the N-terminal section; belongs to the DHBP synthase family. It in the C-terminal section; belongs to the GTP cyclohydrolase II family. The cofactor is Mg(2+). Requires Mn(2+) as cofactor. Zn(2+) is required as a cofactor.

The enzyme catalyses D-ribulose 5-phosphate = (2S)-2-hydroxy-3-oxobutyl phosphate + formate + H(+). It carries out the reaction GTP + 4 H2O = 2,5-diamino-6-hydroxy-4-(5-phosphoribosylamino)-pyrimidine + formate + 2 phosphate + 3 H(+). Its pathway is cofactor biosynthesis; riboflavin biosynthesis; 2-hydroxy-3-oxobutyl phosphate from D-ribulose 5-phosphate: step 1/1. The protein operates within cofactor biosynthesis; riboflavin biosynthesis; 5-amino-6-(D-ribitylamino)uracil from GTP: step 1/4. Catalyzes the conversion of D-ribulose 5-phosphate to formate and 3,4-dihydroxy-2-butanone 4-phosphate. Its function is as follows. Catalyzes the conversion of GTP to 2,5-diamino-6-ribosylamino-4(3H)-pyrimidinone 5'-phosphate (DARP), formate and pyrophosphate. The protein is Riboflavin biosynthesis protein RibBA of Bacillus mycoides (strain KBAB4) (Bacillus weihenstephanensis).